The following is a 444-amino-acid chain: Zeaxanthin 4-ketolase (444 aa).

Positions 408 to 444 (VAGGSSSGGGGEGGKPGAGEHGLLQRQRQLAPVGVMA) are disordered. The span at 412–427 (SSSGGGGEGGKPGAGE) shows a compositional bias: gly residues.

It catalyses the reaction all-trans-adonixanthin + 2 AH2 + 2 O2 = all-trans-(3S,3'S)-astaxanthin + 2 A + 3 H2O. The enzyme catalyses all-trans-zeaxanthin + 2 AH2 + 2 O2 = all-trans-adonixanthin + 2 A + 3 H2O. The catalysed reaction is echinenone + 2 AH2 + 2 O2 = canthaxanthin + 2 A + 3 H2O. It carries out the reaction all-trans-beta-carotene + 2 AH2 + 2 O2 = echinenone + 2 A + 3 H2O. The protein operates within carotenoid biosynthesis; astaxanthin biosynthesis. Involved in the biosynthesis of ketocarotenoids which are powerful anti-oxidative molecules. Catalyzes the conversion of zeaxanthin to astaxanthin via adonixanthin. Catalyzes the conversion of beta-carotene to canthaxanthin via echinenone. In Chlamydomonas reinhardtii (Chlamydomonas smithii), this protein is Zeaxanthin 4-ketolase.